The chain runs to 150 residues: Aspartate 1-decarboxylase (150 aa).

Ser25 serves as the catalytic Schiff-base intermediate with substrate; via pyruvic acid. Ser25 carries the pyruvic acid (Ser) modification. Thr57 is a substrate binding site. Residue Tyr58 is the Proton donor of the active site. 73–75 (GAA) is a binding site for substrate.

It belongs to the PanD family. As to quaternary structure, heterooctamer of four alpha and four beta subunits. It depends on pyruvate as a cofactor. In terms of processing, is synthesized initially as an inactive proenzyme, which is activated by self-cleavage at a specific serine bond to produce a beta-subunit with a hydroxyl group at its C-terminus and an alpha-subunit with a pyruvoyl group at its N-terminus.

The protein resides in the cytoplasm. It carries out the reaction L-aspartate + H(+) = beta-alanine + CO2. It functions in the pathway cofactor biosynthesis; (R)-pantothenate biosynthesis; beta-alanine from L-aspartate: step 1/1. In terms of biological role, catalyzes the pyruvoyl-dependent decarboxylation of aspartate to produce beta-alanine. This Kocuria rhizophila (strain ATCC 9341 / DSM 348 / NBRC 103217 / DC2201) protein is Aspartate 1-decarboxylase.